A 570-amino-acid chain; its full sequence is Probable metalloreductase AIM14 (570 aa).

7 helical membrane-spanning segments follow: residues 21–41 (IKYG…LALL), 70–90 (AIHL…HYSL), 101–118 (LGRL…LTLR), 142–162 (IITV…AIDD), 177–197 (FVGF…IGPM), 204–224 (LFYI…PIHS), and 230–250 (FPFL…RIVF). In terms of domain architecture, Ferric oxidoreductase spans 101 to 219 (LGRLSYALIP…NLVNVAFILL (119 aa)). An FAD-binding FR-type domain is found at 250–388 (FAKSLMILNK…GGSGISFALP (139 aa)). A compositionally biased stretch (polar residues) spans 481–505 (SNFNSENADSNDNTPETSHSPTKEN). The tract at residues 481 to 507 (SNFNSENADSNDNTPETSHSPTKENGS) is disordered.

The protein belongs to the ferric reductase (FRE) family. AIM14 subfamily. As to quaternary structure, interacts with ribosomes.

It localises to the membrane. In terms of biological role, probable cell surface metalloreductase. May be involved in iron or copper homeostasis. In Saccharomyces cerevisiae (strain RM11-1a) (Baker's yeast), this protein is Probable metalloreductase AIM14 (AIM14).